A 144-amino-acid chain; its full sequence is Large ribosomal subunit protein uL16m (144 aa).

The protein belongs to the universal ribosomal protein uL16 family.

It is found in the mitochondrion. This is Large ribosomal subunit protein uL16m (mrpl16) from Dictyostelium discoideum (Social amoeba).